Reading from the N-terminus, the 370-residue chain is 3 beta-hydroxysteroid dehydrogenase/Delta 5--&gt;4-isomerase (370 aa).

The active-site Proton acceptor is Y158. Residue K162 participates in NAD(+) binding.

Belongs to the 3-beta-HSD family. Monomer.

The protein resides in the cytoplasm. It carries out the reaction a 3beta-hydroxy-Delta(5)-steroid + NAD(+) = a 3-oxo-Delta(5)-steroid + NADH + H(+). The enzyme catalyses cholesterol + NAD(+) = cholest-5-en-3-one + NADH + H(+). The catalysed reaction is pregnenolone + NAD(+) = pregn-5-ene-3,20-dione + NADH + H(+). It catalyses the reaction 3beta-hydroxyandrost-5-en-17-one + NAD(+) = androst-5-ene-3,17-dione + NADH + H(+). It carries out the reaction a 3-oxo-Delta(5)-steroid = a 3-oxo-Delta(4)-steroid. The enzyme catalyses cholest-5-en-3-one = cholest-4-en-3-one. The catalysed reaction is pregn-5-ene-3,20-dione = progesterone. It catalyses the reaction androst-5-ene-3,17-dione = androst-4-ene-3,17-dione. Its pathway is lipid metabolism; steroid biosynthesis. 3-beta-HSD is a bifunctional enzyme, that catalyzes the oxidation and isomerization of cholesterol, pregnenolone, and dehydroepiandrosterone (DHEA) into cholest-4-en-3-one, progesterone, and androsterone, respectively. The sequence is that of 3 beta-hydroxysteroid dehydrogenase/Delta 5--&gt;4-isomerase from Mycobacterium tuberculosis (strain CDC 1551 / Oshkosh).